We begin with the raw amino-acid sequence, 122 residues long: Large ribosomal subunit protein uL14 (122 aa).

This sequence belongs to the universal ribosomal protein uL14 family. Part of the 50S ribosomal subunit. Forms a cluster with proteins L3 and L19. In the 70S ribosome, L14 and L19 interact and together make contacts with the 16S rRNA in bridges B5 and B8.

Functionally, binds to 23S rRNA. Forms part of two intersubunit bridges in the 70S ribosome. This Synechococcus sp. (strain JA-2-3B'a(2-13)) (Cyanobacteria bacterium Yellowstone B-Prime) protein is Large ribosomal subunit protein uL14.